Here is a 209-residue protein sequence, read N- to C-terminus: Uracil phosphoribosyltransferase (209 aa).

5-phospho-alpha-D-ribose 1-diphosphate-binding positions include R77, R102, and 129 to 137; that span reads DPMLATGSS. Residues I192 and 197–199 each bind uracil; that span reads GDA. D198 provides a ligand contact to 5-phospho-alpha-D-ribose 1-diphosphate.

This sequence belongs to the UPRTase family. The cofactor is Mg(2+).

It carries out the reaction UMP + diphosphate = 5-phospho-alpha-D-ribose 1-diphosphate + uracil. It functions in the pathway pyrimidine metabolism; UMP biosynthesis via salvage pathway; UMP from uracil: step 1/1. With respect to regulation, allosterically activated by GTP. In terms of biological role, catalyzes the conversion of uracil and 5-phospho-alpha-D-ribose 1-diphosphate (PRPP) to UMP and diphosphate. In Metamycoplasma hominis (Mycoplasma hominis), this protein is Uracil phosphoribosyltransferase.